The sequence spans 231 residues: Octanoyltransferase (231 aa).

In terms of domain architecture, BPL/LPL catalytic spans 29-231 (PQDPDLLWLC…GRQLCIWLAP (203 aa)). Residues 68 to 75 (RGGQVTFH), 164 to 166 (ALG), and 177 to 179 (GVA) each bind substrate. C195 serves as the catalytic Acyl-thioester intermediate.

Belongs to the LipB family.

It is found in the cytoplasm. The catalysed reaction is octanoyl-[ACP] + L-lysyl-[protein] = N(6)-octanoyl-L-lysyl-[protein] + holo-[ACP] + H(+). The protein operates within protein modification; protein lipoylation via endogenous pathway; protein N(6)-(lipoyl)lysine from octanoyl-[acyl-carrier-protein]: step 1/2. Catalyzes the transfer of endogenously produced octanoic acid from octanoyl-acyl-carrier-protein onto the lipoyl domains of lipoate-dependent enzymes. Lipoyl-ACP can also act as a substrate although octanoyl-ACP is likely to be the physiological substrate. The polypeptide is Octanoyltransferase (Verminephrobacter eiseniae (strain EF01-2)).